A 1011-amino-acid chain; its full sequence is RAS protein activator like-3 (1011 aa).

The segment at Met1 to Phe38 is disordered. Low complexity predominate over residues Ser7–Ser22. 2 positions are modified to phosphoserine: Ser18 and Ser51. Disordered stretches follow at residues His52–Asp136, Gly151–Gln197, and Lys209–Glu230. Residues Ser81–Asn95 show a composition bias toward basic residues. Acidic residues predominate over residues Pro100–Leu117. The segment covering Glu118–Asn131 has biased composition (pro residues). 4 positions are modified to phosphoserine: Ser164, Ser166, Ser167, and Ser170. The segment covering Arg179 to Pro190 has biased composition (basic and acidic residues). One can recognise a PH domain in the interval Gln197–Gln293. Phosphoserine is present on residues Ser224, Ser228, and Ser231. Thr234 is subject to Phosphothreonine. In terms of domain architecture, C2 spans Trp284–Phe404. The 209-residue stretch at Gly474–Val682 folds into the Ras-GAP domain. 2 disordered regions span residues Gln756–His885 and Leu987–Thr1011. Phosphoserine is present on residues Ser787 and Ser790. Positions Arg792–Leu808 are enriched in basic and acidic residues. Composition is skewed to polar residues over residues Gln871 to Leu882 and Leu987 to Gln999. A coiled-coil region spans residues Val888–Ser988. Ser988 is modified (phosphoserine).

As to expression, predominantly expressed in cells of hematopoietic lineages.

Its subcellular location is the cytoplasm. It localises to the cell cortex. Functionally, functions as a Ras GTPase-activating protein. Plays an important role in the expansion and functions of natural killer T (NKT) cells in the liver by negatively regulating RAS activity and the down-stream ERK signaling pathway. The protein is RAS protein activator like-3 (RASAL3) of Homo sapiens (Human).